The chain runs to 592 residues: Aspartate--tRNA(Asp/Asn) ligase (592 aa).

Glutamate 182 is a binding site for L-aspartate. An aspartate region spans residues 206 to 209 (QIFK). Position 228 (arginine 228) interacts with L-aspartate. ATP contacts are provided by residues 228–230 (RDE) and glutamine 237. Histidine 455 provides a ligand contact to L-aspartate. Residue glutamate 489 coordinates ATP. Arginine 496 provides a ligand contact to L-aspartate. ATP is bound at residue 541-544 (GLDR).

This sequence belongs to the class-II aminoacyl-tRNA synthetase family. Type 1 subfamily. In terms of assembly, homodimer.

It is found in the cytoplasm. The enzyme catalyses tRNA(Asx) + L-aspartate + ATP = L-aspartyl-tRNA(Asx) + AMP + diphosphate. Functionally, aspartyl-tRNA synthetase with relaxed tRNA specificity since it is able to aspartylate not only its cognate tRNA(Asp) but also tRNA(Asn). Reaction proceeds in two steps: L-aspartate is first activated by ATP to form Asp-AMP and then transferred to the acceptor end of tRNA(Asp/Asn). This chain is Aspartate--tRNA(Asp/Asn) ligase, found in Thermoanaerobacter pseudethanolicus (strain ATCC 33223 / 39E) (Clostridium thermohydrosulfuricum).